The sequence spans 217 residues: UPF0502 protein ESA_02280 (217 aa).

The protein belongs to the UPF0502 family.

This Cronobacter sakazakii (strain ATCC BAA-894) (Enterobacter sakazakii) protein is UPF0502 protein ESA_02280.